The following is a 330-amino-acid chain: Fructose-1,6-bisphosphatase class 1 (330 aa).

Residues Glu78, Asp97, Leu99, and Asp100 each contribute to the Mg(2+) site. Residues Asp100–Ser103 and Asn188 each bind substrate. Glu260 contacts Mg(2+).

Belongs to the FBPase class 1 family. Homotetramer. The cofactor is Mg(2+).

It localises to the cytoplasm. It carries out the reaction beta-D-fructose 1,6-bisphosphate + H2O = beta-D-fructose 6-phosphate + phosphate. It participates in carbohydrate biosynthesis; gluconeogenesis. The sequence is that of Fructose-1,6-bisphosphatase class 1 from Paracoccus denitrificans (strain Pd 1222).